The sequence spans 388 residues: Alanine racemase (388 aa).

Lys44 (proton acceptor; specific for D-alanine) is an active-site residue. Residue Lys44 is modified to N6-(pyridoxal phosphate)lysine. Substrate is bound at residue Arg142. Tyr273 (proton acceptor; specific for L-alanine) is an active-site residue. Met321 contributes to the substrate binding site.

Belongs to the alanine racemase family. Requires pyridoxal 5'-phosphate as cofactor.

The enzyme catalyses L-alanine = D-alanine. It participates in amino-acid biosynthesis; D-alanine biosynthesis; D-alanine from L-alanine: step 1/1. Catalyzes the interconversion of L-alanine and D-alanine. May also act on other amino acids. The polypeptide is Alanine racemase (alr) (Mycobacterium leprae (strain TN)).